We begin with the raw amino-acid sequence, 1091 residues long: MASVYIPVQNSEEEVRVVLDQLPRDASDILDILKAEQAPLDLWLIIAREYFKQGKIEQFRQILEEGSSSDIDEYYADVKYERIAILNALGAYYSYLGKTETKNREKEEQFISATRYYNKASRIDMHEPSTWVGKGQLLLAKGEIDNALQAFKIVLDTAPDNVPALLGQASVEFNRGRFSESLQLYKRALQVFPGCPAAVRLGIGLCRYKLGQLDKARQAFDRVLQLDPDNVEALVALGIMDLQANDSIGMRKGMDRMQQAFEIYPYCASALNYLANHFFFTGQHFLVEQLTETALAVTTHGPTKSHSFYNLARSYHSKGDFEKAGMYYMAAIKETNNNPHEFVFPYFGLGQVQLKLGELKGSVFNFEKVLEVYPDNCETLKALGHLYTQLGQNEKALEYMRKATKLDPRDAQAFVGLGELLISSDTGAALDAFKMARTLMKKGGQEVPIEVLNDIGALHFEREEFESALENFKEALGDGIWISFLDEKENLEQTGVSVLGYKDTGIFHRLIESGHSVDVPWNKVTTLFNLARLLEQIHKTEAATFMYRLILFKYPGYIDAYLRLAASAKAQNNLPLAIELVNEALKVDDKNPNALSLLGELELKNDDWVKAKETFRAANDATDGKDSYAILSLGNWNYFAAMRNEKRNPKLEATHLEKAKELYTKVLTQHNSNMYAANGSGIVLAEKGQFDIAKDVFTQVQEAASGSVFLQMPDVWVNLAHVYFAQGNFALTVKMYQNCLRKFFYNTDSQILLYLARTHYEAEQWQECKKTLLRAIHLTPSNYTFRFDLGAVMQKSSSSTLQKKKRTADEVRSTVAEAENAVRVFTQLSAASDLHVHGFDSKKIQTHVQYCSHLLEAAKVHREAAEQEELQNRQRLEVARQAALAEEARRKAEEQRKYQLEKRKQEEELRRLKQEEEKFQRIKEQWKSSTPGSNKRKDRVEDDDGESKPSERRRKKGGKRRKKDKSSRARHYEDDEEEAATMDDHNEVEDEDANTNYNREDEMTTQEAEEPVDDDAHDLLAAAGLEDPDVDDDEVPTSGVRRRRALSSSDEEGELMEESHPNSSPQKEKEESNGEAGDPNMEEEEEEEEAN.

Alanine 2 is subject to N-acetylalanine. TPR repeat units follow at residues 90–127 (GAYY…DMHE), 128–161 (PSTW…APDN), 163–195 (PALL…FPGC), 197–230 (AAVR…DPDN), 232–267 (EALV…YPYC), 305–338 (SHSF…TNNN), 343–376 (VFPY…YPDN), 377–410 (CETL…DPRD), 412–443 (QAFV…MKKG), 449–482 (IEVL…GIWI), 558–591 (IDAY…DDKN), 593–625 (NALS…TDGK), 640–673 (AAMR…HNSN), 674–707 (MYAA…ASGS), 713–746 (PDVW…FFYN), and 749–782 (SQIL…TPSN). A disordered region spans residues 919-1091 (FQRIKEQWKS…EEEEEEEEAN (173 aa)). Positions 951–965 (ERRRKKGGKRRKKDK) are enriched in basic residues. 4 stretches are compositionally biased toward acidic residues: residues 974–993 (DDEE…DEDA), 1003–1016 (MTTQ…DDDA), 1026–1035 (EDPDVDDDEV), and 1080–1091 (NMEEEEEEEEAN).

In terms of assembly, component of the nuclear PAF1 complex (PAF1C), which consists of VIP2/ELF7/PAF1, VIP3/SKI8/WDR61, VIP4/LEO1, VIP5/RTF1, VIP6/ELF8/CTR9 and CDC73. Interacts with VIP3 and VIP4. As to expression, expressed in roots, leaves and shoot apex.

The protein localises to the nucleus. Its function is as follows. Component of the PAF1 complex (PAF1C) which is involved in histone modifications such as methylation on histone H3 'Lys-4' (H3K4me3). Involved in regulation of flowering time. Required for the expression of the MADS box genes and flowering repressors FLC, AGL27/FLM and AGL31/MAF2. Required for histone H3 trimethylation on 'Lys-4' H3K4me3 at the FLC and AGL27/FLM loci. Involved in the control of seed dormancy and germination. The polypeptide is Protein CTR9 homolog (Arabidopsis thaliana (Mouse-ear cress)).